The following is a 360-amino-acid chain: 3-dehydroquinate synthase (360 aa).

NAD(+)-binding positions include 69 to 74, 103 to 107, 127 to 128, lysine 140, lysine 149, and 167 to 170; these read DGEKYK, GVVGD, TT, and TLDT. Glutamate 182, histidine 246, and histidine 263 together coordinate Zn(2+).

Belongs to the sugar phosphate cyclases superfamily. Dehydroquinate synthase family. It depends on Co(2+) as a cofactor. Zn(2+) is required as a cofactor. NAD(+) serves as cofactor.

The protein localises to the cytoplasm. The catalysed reaction is 7-phospho-2-dehydro-3-deoxy-D-arabino-heptonate = 3-dehydroquinate + phosphate. It functions in the pathway metabolic intermediate biosynthesis; chorismate biosynthesis; chorismate from D-erythrose 4-phosphate and phosphoenolpyruvate: step 2/7. In terms of biological role, catalyzes the conversion of 3-deoxy-D-arabino-heptulosonate 7-phosphate (DAHP) to dehydroquinate (DHQ). This chain is 3-dehydroquinate synthase, found in Vesicomyosocius okutanii subsp. Calyptogena okutanii (strain HA).